The sequence spans 62 residues: Large ribosomal subunit protein eL24 (62 aa).

Zn(2+) contacts are provided by Cys-6, Cys-9, Cys-32, and Cys-36. Residues Cys-6–Cys-36 form a C4-type zinc finger.

This sequence belongs to the eukaryotic ribosomal protein eL24 family. As to quaternary structure, part of the 50S ribosomal subunit. Forms a cluster with proteins L3 and L14. Zn(2+) is required as a cofactor.

Binds to the 23S rRNA. The polypeptide is Large ribosomal subunit protein eL24 (Methanosarcina mazei (strain ATCC BAA-159 / DSM 3647 / Goe1 / Go1 / JCM 11833 / OCM 88) (Methanosarcina frisia)).